Here is a 251-residue protein sequence, read N- to C-terminus: Large ribosomal subunit protein uL16m (251 aa).

A mitochondrion-targeting transit peptide spans 1–29 (MWRLLTRAPAPLWRMHFSDTWAALPTSAG).

It belongs to the universal ribosomal protein uL16 family. As to quaternary structure, component of the mitochondrial ribosome large subunit (39S) which comprises a 16S rRNA and about 50 distinct proteins.

It localises to the mitochondrion. The sequence is that of Large ribosomal subunit protein uL16m (Mrpl16) from Rattus norvegicus (Rat).